A 299-amino-acid polypeptide reads, in one-letter code: ATP phosphoribosyltransferase (299 aa).

The protein belongs to the ATP phosphoribosyltransferase family. Long subfamily. Requires Mg(2+) as cofactor.

The protein resides in the cytoplasm. The enzyme catalyses 1-(5-phospho-beta-D-ribosyl)-ATP + diphosphate = 5-phospho-alpha-D-ribose 1-diphosphate + ATP. It participates in amino-acid biosynthesis; L-histidine biosynthesis; L-histidine from 5-phospho-alpha-D-ribose 1-diphosphate: step 1/9. Its activity is regulated as follows. Feedback inhibited by histidine. Functionally, catalyzes the condensation of ATP and 5-phosphoribose 1-diphosphate to form N'-(5'-phosphoribosyl)-ATP (PR-ATP). Has a crucial role in the pathway because the rate of histidine biosynthesis seems to be controlled primarily by regulation of HisG enzymatic activity. This chain is ATP phosphoribosyltransferase, found in Actinobacillus pleuropneumoniae serotype 7 (strain AP76).